Reading from the N-terminus, the 522-residue chain is Sorting nexin-1 (522 aa).

Residues 1 to 142 (MASGGGGCSA…ELEEEEQEDQ (142 aa)) are disordered. 2 positions are modified to phosphoserine: Ser-32 and Ser-39. Positions 35 to 45 (EAGDSDTEGED) are enriched in acidic residues. Thr-41 and Thr-48 each carry phosphothreonine. The segment covering 55 to 65 (KPQSPKKTTSL) has biased composition (polar residues). A phosphoserine mark is found at Ser-58 and Ser-72. Residues 71–80 (GSKENGIHEE) show a composition bias toward basic and acidic residues. The span at 98-107 (LDSTQNNQKT) shows a compositional bias: polar residues. The span at 132–142 (EELEEEEQEDQ) shows a compositional bias: acidic residues. Positions 143 to 272 (FDLTVGITDP…EFLEKEELPR (130 aa)) constitute a PX domain. Positions 186, 188, and 214 each coordinate a 1,2-diacyl-sn-glycero-3-phospho-(1D-myo-inositol-3-phosphate). A Phosphoserine modification is found at Ser-188. Position 237 is an N6-acetyllysine (Lys-237). Arg-238 serves as a coordination point for a 1,2-diacyl-sn-glycero-3-phospho-(1D-myo-inositol-3-phosphate). Position 280 is a phosphoserine (Ser-280). Residues 281-298 (GAGLLKMFNKATDAVSKM) are membrane-binding amphipathic helix. The BAR domain maps to 302-522 (MNESDIWFEE…AFLPEARAIS (221 aa)).

The protein belongs to the sorting nexin family. As to quaternary structure, predominantly forms heterodimers with BAR domain-containing sorting nexins SNX5, SNX6 and SNX32; can self-associate to form homodimers. The heterodimers are proposed to self-assemble into helical arrays on the membrane to stabilize and expand local membrane curvature underlying endosomal tubule formation. Thought to be a component of the originally described retromer complex (also called SNX-BAR retromer) which is a pentamer containing the heterotrimeric retromer cargo-selective complex (CSC), also described as vacuolar protein sorting subcomplex (VPS) and a heterodimeric membrane-deforming subcomplex formed between SNX1 or SNX2 and SNX5 or SNX6 (also called SNX-BAR subcomplex); the respective CSC and SNX-BAR subcomplexes associate with low affinity. Interacts with SNX5, SNX6, SNX32, VPS26A, VPS29, VPS35, DRD5, DENND5A, KALRN, RHOG (GDP-bound form). The interaction with SNX2 is reported controversially. Interacts with DNAJC13; prevented by presence of HGS. Interacts with HGS.

Its subcellular location is the endosome membrane. It is found in the golgi apparatus. The protein resides in the trans-Golgi network membrane. The protein localises to the early endosome membrane. It localises to the cell projection. Its subcellular location is the lamellipodium. Involved in several stages of intracellular trafficking. Interacts with membranes containing phosphatidylinositol 3-phosphate (PtdIns(3P)) or phosphatidylinositol 3,5-bisphosphate (PtdIns(3,5)P2). Acts in part as component of the retromer membrane-deforming SNX-BAR subcomplex. The SNX-BAR retromer mediates retrograde transport of cargo proteins from endosomes to the trans-Golgi network (TGN) and is involved in endosome-to-plasma membrane transport for cargo protein recycling. The SNX-BAR subcomplex functions to deform the donor membrane into a tubular profile called endosome-to-TGN transport carrier (ETC). Can sense membrane curvature and has in vitro vesicle-to-membrane remodeling activity. Involved in retrograde endosome-to-TGN transport of lysosomal enzyme receptors (IGF2R, M6PR and SORT1). Plays a role in targeting ligand-activated EGFR to the lysosomes for degradation after endocytosis from the cell surface and release from the Golgi. Involvement in retromer-independent endocytic trafficking of P2RY1 and lysosomal degradation of protease-activated receptor-1/F2R. Promotes KALRN- and RHOG-dependent but retromer-independent membrane remodeling such as lamellipodium formation; the function is dependent on GEF activity of KALRN. Required for endocytosis of DRD5 upon agonist stimulation but not for basal receptor trafficking. This Rattus norvegicus (Rat) protein is Sorting nexin-1 (Snx1).